Reading from the N-terminus, the 189-residue chain is Probable DNA-directed RNA polymerase subunit delta (189 aa).

An HTH HARE-type domain is found at 14 to 81 (LSMIEVAHAI…GENVWALRTW (68 aa)). Acidic residues-rich tracts occupy residues 90 to 100 (EVDHPEDDGDE) and 118 to 189 (EGDD…EDEE). Residues 90-189 (EVDHPEDDGD…DDLDDDEDEE (100 aa)) are disordered.

The protein belongs to the RpoE family. In terms of assembly, RNAP is composed of a core of 2 alpha, a beta and a beta' subunits. The core is associated with a delta subunit and one of several sigma factors.

In terms of biological role, participates in both the initiation and recycling phases of transcription. In the presence of the delta subunit, RNAP displays an increased specificity of transcription, a decreased affinity for nucleic acids, and an increased efficiency of RNA synthesis because of enhanced recycling. The polypeptide is Probable DNA-directed RNA polymerase subunit delta (Lactobacillus delbrueckii subsp. bulgaricus (strain ATCC BAA-365 / Lb-18)).